Here is a 207-residue protein sequence, read N- to C-terminus: Superoxide dismutase [Mn] (207 aa).

Positions 30, 78, 166, and 170 each coordinate Mn(2+).

This sequence belongs to the iron/manganese superoxide dismutase family. Homodimer. Mn(2+) serves as cofactor.

It catalyses the reaction 2 superoxide + 2 H(+) = H2O2 + O2. Functionally, destroys superoxide anion radicals which are normally produced within the cells and which are toxic to biological systems. This Chlamydia pneumoniae (Chlamydophila pneumoniae) protein is Superoxide dismutase [Mn] (sodA).